Consider the following 1172-residue polypeptide: WD repeat-containing protein 48 homolog (1172 aa).

Positions 1–115 (MYEYYSTGKI…HSYGGGGGGT (115 aa)) are disordered. The segment covering 13–36 (LPQQVDSNGINSKPMNSSPSTPIP) has biased composition (polar residues). Low complexity predominate over residues 37 to 63 (NNNNNNNNNNNNNNNNNNNNNNNNNNN). A compositionally biased stretch (polar residues) spans 64-89 (RNKSQQSFYLNNNNRNCGFSSPTKPQ). Residues 90-107 (YNNNNNNNNNNNSNYNHS) show a composition bias toward low complexity. WD repeat units lie at residues 152 to 202 (RHCF…GFKF), 208 to 246 (DHTD…CVNS), 249 to 548 (FHDD…SPMF), 560 to 599 (GEGI…KIFK), 602 to 641 (GHTD…CIQV), 645 to 683 (LHTD…QSRL), and 686 to 727 (RENE…NQSI). Residues 341–365 (ISTNNNNNNSSSSNNNNNNNNNNNN) show a composition bias toward low complexity. A disordered region spans residues 341-544 (ISTNNNNNNS…NDNNNLNKKF (204 aa)). Composition is skewed to polar residues over residues 366–377 (GQTNTHENTAET), 388–408 (QLSS…NFRN), and 417–434 (PPSS…SNGR). The segment covering 435 to 485 (NVNNRENNNNNNNNNNNNNNNNNNNNNNNNNNNNNNNNNINNNNHENNGNV) has biased composition (low complexity). Positions 486–503 (DVDDEDDDDDDDDDDDDD) are enriched in acidic residues. The segment covering 504 to 513 (CNKNKKKYDD) has biased composition (basic and acidic residues). The span at 514 to 543 (NNNNNNYNNNNNKKNNSNDNNNDNNNLNKK) shows a compositional bias: low complexity. A compositionally biased stretch (low complexity) spans 745–769 (NNNNNNNNNNNNNNNNNNNNNNNNN). The segment at 745-775 (NNNNNNNNNNNNNNNNNNNNNNNNNNREKLS) is disordered. One copy of the WD 8 repeat lies at 794–833 (QGRAGIIKNQVLNNRRQVLTKDNDNNVQLWDITKGKEIES). The disordered stretch occupies residues 926-986 (ELNHSNDSVN…TNSTTPNSGR (61 aa)). Positions 930-984 (SNDSVNSSLSSNTSGDNNNNNYNNYNNYNNNNNNGLQKSSSSSSIVSTNSTTPNS) are enriched in low complexity.

Belongs to the WD repeat WDR48 family.

In Dictyostelium discoideum (Social amoeba), this protein is WD repeat-containing protein 48 homolog.